A 541-amino-acid chain; its full sequence is Chloride channel CLIC-like protein 1 (541 aa).

Residues 1–18 (MLCSLLLCGCLLLITGYA) form the signal peptide. Residues 19 to 184 (HDDDWIDPTD…EDYFGVDPYN (166 aa)) are Lumenal-facing. Residues 185-205 (VFMVLLCLLCIVALVATELWT) traverse the membrane as a helical segment. Over 206–217 (YVRWHTQLKRVC) the chain is Cytoplasmic. The chain crosses the membrane as a helical span at residues 218 to 238 (IISFLVSLGWNWIYLYKVAFA). Over 239–329 (QHQANVAKMA…GEFIKALMKE (91 aa)) the chain is Lumenal. A helical transmembrane segment spans residues 330–350 (IPVLLQIPVLVILALAVLGFC). Residues 351–541 (YGAGQSVPML…GTDPVSSPCG (191 aa)) lie on the Cytoplasmic side of the membrane. The disordered stretch occupies residues 362–381 (HFRGPEREPPRALEPDDRRR). Basic and acidic residues predominate over residues 364–381 (RGPEREPPRALEPDDRRR). Serine 434 and serine 438 each carry phosphoserine. Threonine 482 is subject to Phosphothreonine. Serine 504 carries the phosphoserine modification. Positions 511–522 (QLKTDSECRPHS) are enriched in basic and acidic residues. A disordered region spans residues 511 to 541 (QLKTDSECRPHSTEAAAAAARGTDPVSSPCG).

It belongs to the chloride channel MCLC family. Homomultimers. Interacts with mitochondrial protein PIGBOS1 (via C-terminus); the interaction occurs at the mitochondria-associated endoplasmic reticulum (ER) membrane, a zone of contact between the ER and mitochondrial membranes, but does not appear to play a role in ER-mitochondria tethering and is not affected by ER stress. Interacts with CALR. As to expression, expressed in testis (spermatocytes), liver and lung (at protein level). Expressed in spleen, liver, testis, kidney, heart, brain and lung.

The protein localises to the endoplasmic reticulum membrane. The enzyme catalyses chloride(in) = chloride(out). The catalysed reaction is bromide(in) = bromide(out). It catalyses the reaction nitrate(in) = nitrate(out). It carries out the reaction fluoride(in) = fluoride(out). Anion-selective channel with Ca(2+)-dependent and voltage-independent gating. Permeable to small monovalent anions with selectivity for bromide &gt; chloride &gt; nitrate &gt; fluoride. Operates in the endoplasmic reticulum (ER) membrane where it mediates chloride efflux to compensate for the loss of positive charges from the ER lumen upon Ca(2+) release. Contributes to the maintenance of ER Ca(2+) pools and activation of unfolded protein response to prevent accumulation of misfolded proteins in the ER lumen. Particularly involved in ER homeostasis mechanisms underlying motor neurons and retinal photoreceptors survival. In Rattus norvegicus (Rat), this protein is Chloride channel CLIC-like protein 1.